The primary structure comprises 215 residues: 2-phospho-L-lactate guanylyltransferase (215 aa).

Belongs to the CofC family. As to quaternary structure, homodimer.

The enzyme catalyses (2S)-2-phospholactate + GTP + H(+) = (2S)-lactyl-2-diphospho-5'-guanosine + diphosphate. The protein operates within cofactor biosynthesis; coenzyme F420 biosynthesis. In terms of biological role, guanylyltransferase that catalyzes the activation of (2S)-2-phospholactate (2-PL) as (2S)-lactyl-2-diphospho-5'-guanosine, via the condensation of 2-PL with GTP. It is involved in the biosynthesis of coenzyme F420, a hydride carrier cofactor. This is 2-phospho-L-lactate guanylyltransferase from Methanoculleus marisnigri (strain ATCC 35101 / DSM 1498 / JR1).